Reading from the N-terminus, the 201-residue chain is dITP/XTP pyrophosphatase (201 aa).

Position 9-14 (9-14 (TRNSGK)) interacts with substrate. Residues Glu42 and Asp71 each contribute to the Mg(2+) site. Residue Asp71 is the Proton acceptor of the active site. Residues Ser72, 156–159 (FGYD), Lys178, and 183–184 (HR) each bind substrate.

Belongs to the HAM1 NTPase family. As to quaternary structure, homodimer. Mg(2+) is required as a cofactor.

The enzyme catalyses XTP + H2O = XMP + diphosphate + H(+). It carries out the reaction dITP + H2O = dIMP + diphosphate + H(+). It catalyses the reaction ITP + H2O = IMP + diphosphate + H(+). In terms of biological role, pyrophosphatase that catalyzes the hydrolysis of nucleoside triphosphates to their monophosphate derivatives, with a high preference for the non-canonical purine nucleotides XTP (xanthosine triphosphate), dITP (deoxyinosine triphosphate) and ITP. Seems to function as a house-cleaning enzyme that removes non-canonical purine nucleotides from the nucleotide pool, thus preventing their incorporation into DNA/RNA and avoiding chromosomal lesions. The sequence is that of dITP/XTP pyrophosphatase (ynbD) from Lactococcus lactis subsp. lactis (strain IL1403) (Streptococcus lactis).